The primary structure comprises 525 residues: Bifunctional purine biosynthesis protein PurH (525 aa).

In terms of domain architecture, MGS-like spans 1–147 (MTKIERALIS…KNWAHVAIVT (147 aa)).

It belongs to the PurH family.

It catalyses the reaction (6R)-10-formyltetrahydrofolate + 5-amino-1-(5-phospho-beta-D-ribosyl)imidazole-4-carboxamide = 5-formamido-1-(5-phospho-D-ribosyl)imidazole-4-carboxamide + (6S)-5,6,7,8-tetrahydrofolate. It carries out the reaction IMP + H2O = 5-formamido-1-(5-phospho-D-ribosyl)imidazole-4-carboxamide. Its pathway is purine metabolism; IMP biosynthesis via de novo pathway; 5-formamido-1-(5-phospho-D-ribosyl)imidazole-4-carboxamide from 5-amino-1-(5-phospho-D-ribosyl)imidazole-4-carboxamide (10-formyl THF route): step 1/1. It participates in purine metabolism; IMP biosynthesis via de novo pathway; IMP from 5-formamido-1-(5-phospho-D-ribosyl)imidazole-4-carboxamide: step 1/1. This Chromobacterium violaceum (strain ATCC 12472 / DSM 30191 / JCM 1249 / CCUG 213 / NBRC 12614 / NCIMB 9131 / NCTC 9757 / MK) protein is Bifunctional purine biosynthesis protein PurH.